We begin with the raw amino-acid sequence, 1333 residues long: Protein CLASP-1 (1333 aa).

One copy of the HEAT 1 repeat lies at 168–206; it reads LIPQLCRLTNDPNSEVRDASTNCLVDLMVFGGKSIIAKI. Low complexity predominate over residues 269–305; the sequence is STTSFTSSARLSTPPRTNAPSLSPSPSTPSPLSLPAA. The tract at residues 269–311 is disordered; it reads STTSFTSSARLSTPPRTNAPSLSPSPSTPSPLSLPAANGRSRD. The stretch at 360–389 forms a coiled coil; the sequence is SNSDVREKLETANSVLRNANEDWSKRANQL. 2 disordered regions span residues 579–711 and 764–792; these read QKML…HQTP and TPPK…NSSN. Positions 601 to 611 are enriched in low complexity; it reads NQKQPQQPQQN. A compositionally biased stretch (polar residues) spans 612 to 644; the sequence is ISQKFLSQRSASALDNKSQVLSIAKPQQSNPSR. Low complexity-rich tracts occupy residues 657–669 and 686–707; these read SSTS…VRSS and TNFN…STST. The stretch at 1266-1304 is one HEAT 2 repeat; the sequence is VAPCFVSAYDSTSSSVRKCAVFGLVALVQRVGMPRLETH.

Belongs to the CLASP family.

Its subcellular location is the cytoplasm. The protein localises to the cytoskeleton. Functionally, microtubule plus-end tracking protein that promotes the stabilization of dynamic microtubules. The polypeptide is Protein CLASP-1 (Caenorhabditis briggsae).